The following is a 406-amino-acid chain: MASKKIKVDEVPKLSVKEKEIEEKSSSSSSSSSSSSSSSSSSSSSSSSSGESSSSSSSSSSSSSSDSSDSSDSESSSSSSSSSSSSSSSSDSESSSESDSSSSGSSSSSSSSSDESSSESESEDETKKRARESDNEDAKETKKAKTEPESSSSSESSSSGSSSSSESESGSESDSDSSSSSSSSSDSESDSESDSQSSSSSSSSDSSSDSDSSSSDSSSDSDSSSSSSSSSSDSDSDSDSSSDSDSSGSSDSSSSSDSSSDESTSSDSSDSDSDSDSGSSSELETKEATADESKAEETPASSNESTPSASSSSSANKLNIPAGTDEIKEGQRKHFSRVDRSKINFEAWELTDNTYKGAAGTWGEKANEKLGRVRGKDFTKNKNKMKRGSYRGGSITLESGSYKFQD.

Basic and acidic residues predominate over residues 1–25 (MASKKIKVDEVPKLSVKEKEIEEKS). The tract at residues 1 to 335 (MASKKIKVDE…EIKEGQRKHF (335 aa)) is disordered. Over residues 26-115 (SSSSSSSSSS…SSSSSSSSDE (90 aa)) the composition is skewed to low complexity. The span at 125-148 (ETKKRARESDNEDAKETKKAKTEP) shows a compositional bias: basic and acidic residues. Serine 133 is modified (phosphoserine). Low complexity-rich tracts occupy residues 149-168 (ESSS…SESE), 176-186 (DSSSSSSSSSD), 194-233 (DSQS…SSSD), and 243-268 (DSDS…SSDS). The segment covering 283 to 297 (LETKEATADESKAEE) has biased composition (basic and acidic residues). Position 289 is a phosphothreonine (threonine 289). Serine 293 carries the post-translational modification Phosphoserine. Over residues 298–316 (TPASSNESTPSASSSSSAN) the composition is skewed to low complexity. Basic and acidic residues predominate over residues 325–335 (DEIKEGQRKHF). Serine 394 is modified (phosphoserine).

In terms of processing, pyrophosphorylated by 5-diphosphoinositol pentakisphosphate (5-IP7). Serine pyrophosphorylation is achieved by Mg(2+)-dependent, but enzyme independent transfer of a beta-phosphate from a inositol pyrophosphate to a pre-phosphorylated serine residue.

In terms of biological role, not known; weak suppressor of a mutant of the subunit AC40 of DNA dependent RNA polymerase I and III. This Saccharomyces cerevisiae (strain ATCC 204508 / S288c) (Baker's yeast) protein is Suppressor protein SRP40 (SRP40).